Reading from the N-terminus, the 258-residue chain is DNA repair protein RecO (258 aa).

This sequence belongs to the RecO family.

Functionally, involved in DNA repair and RecF pathway recombination. This is DNA repair protein RecO from Oceanobacillus iheyensis (strain DSM 14371 / CIP 107618 / JCM 11309 / KCTC 3954 / HTE831).